The primary structure comprises 356 residues: Transcription factor ATOH1 (356 aa).

Positions 1 to 21 (MSRLLHAEEWAEVKELGDHHR) are enriched in basic and acidic residues. 2 disordered regions span residues 1-56 (MSRL…PELS) and 92-125 (SEAA…GPVK). Over residues 26 to 40 (HHLPQPPPPPPPQPP) the composition is skewed to pro residues. Over residues 96–109 (APRDEVDGRGELVR) the composition is skewed to basic and acidic residues. Residues 110–124 (RSSGGASSSKSPGPV) are compositionally biased toward low complexity. A bHLH domain is found at 161 to 213 (QRRLAANARERRRMHGLNHAFDQLRNVIPSFNNDKKLSKYETLQMAQIYINAL). Disordered stretches follow at residues 218–279 (QTPS…TRFS) and 314–356 (SPSL…DEAS). Positions 252-266 (NATAAGAQQASGGSQ) are enriched in low complexity. Positions 337-356 (HRSDGEFSPHSHYSDSDEAS) are enriched in basic and acidic residues.

In terms of assembly, efficient DNA binding requires dimerization with another bHLH protein.

It localises to the nucleus. Its function is as follows. Transcriptional regulator. Activates E box-dependent transcription in collaboration with TCF3/E47, but the activity is completely antagonized by the negative regulator of neurogenesis HES1. Plays a role in the differentiation of subsets of neural cells by activating E box-dependent transcription. The protein is Transcription factor ATOH1 of Pan troglodytes (Chimpanzee).